The sequence spans 460 residues: Bifunctional protein GlmU (460 aa).

Residues 1-235 (MALSAAIVLA…PLTVEGVNDR (235 aa)) form a pyrophosphorylase region. UDP-N-acetyl-alpha-D-glucosamine-binding positions include 9 to 12 (LAAG), Lys23, Gln76, and 81 to 82 (GT). Asp109 is a Mg(2+) binding site. UDP-N-acetyl-alpha-D-glucosamine-binding residues include Gly146, Glu161, Asn176, and Asn233. Asn233 serves as a coordination point for Mg(2+). Residues 236–256 (VQLAALSKTYNRRVCERWMRN) form a linker region. The N-acetyltransferase stretch occupies residues 257 to 460 (GVTILDPETT…VEGWKPAWER (204 aa)). Positions 338 and 356 each coordinate UDP-N-acetyl-alpha-D-glucosamine. His368 acts as the Proton acceptor in catalysis. Positions 371 and 382 each coordinate UDP-N-acetyl-alpha-D-glucosamine. Residues 391-392 (NY) and Ala428 contribute to the acetyl-CoA site.

The protein in the N-terminal section; belongs to the N-acetylglucosamine-1-phosphate uridyltransferase family. It in the C-terminal section; belongs to the transferase hexapeptide repeat family. Homotrimer. Requires Mg(2+) as cofactor.

Its subcellular location is the cytoplasm. It carries out the reaction alpha-D-glucosamine 1-phosphate + acetyl-CoA = N-acetyl-alpha-D-glucosamine 1-phosphate + CoA + H(+). The catalysed reaction is N-acetyl-alpha-D-glucosamine 1-phosphate + UTP + H(+) = UDP-N-acetyl-alpha-D-glucosamine + diphosphate. The protein operates within nucleotide-sugar biosynthesis; UDP-N-acetyl-alpha-D-glucosamine biosynthesis; N-acetyl-alpha-D-glucosamine 1-phosphate from alpha-D-glucosamine 6-phosphate (route II): step 2/2. It functions in the pathway nucleotide-sugar biosynthesis; UDP-N-acetyl-alpha-D-glucosamine biosynthesis; UDP-N-acetyl-alpha-D-glucosamine from N-acetyl-alpha-D-glucosamine 1-phosphate: step 1/1. It participates in bacterial outer membrane biogenesis; LPS lipid A biosynthesis. Its function is as follows. Catalyzes the last two sequential reactions in the de novo biosynthetic pathway for UDP-N-acetylglucosamine (UDP-GlcNAc). The C-terminal domain catalyzes the transfer of acetyl group from acetyl coenzyme A to glucosamine-1-phosphate (GlcN-1-P) to produce N-acetylglucosamine-1-phosphate (GlcNAc-1-P), which is converted into UDP-GlcNAc by the transfer of uridine 5-monophosphate (from uridine 5-triphosphate), a reaction catalyzed by the N-terminal domain. The chain is Bifunctional protein GlmU from Bifidobacterium longum subsp. infantis (strain ATCC 15697 / DSM 20088 / JCM 1222 / NCTC 11817 / S12).